The chain runs to 292 residues: Glutathione S-transferase L2, chloroplastic (292 aa).

A chloroplast-targeting transit peptide spans 1 to 56; that stretch reads MSVGLKVSAFLHPTLALSSRDVSLSSSSSSLYLDRKILRPGSGRRWCKSRRTEPIL. The 82-residue stretch at 79-160 folds into the GST N-terminal domain; the sequence is GSTRLYISYT…YIDTNFEGPS (82 aa). Glutathione-binding positions include 89–90, 117–118, 131–132, and 144–145; these read CP, NR, KV, and ES. Residues 130 to 286 form the GST C-terminal domain; the sequence is NKVPALEHNN…ELVERYKRRV (157 aa).

This sequence belongs to the GST superfamily. Lambda family.

It is found in the plastid. It localises to the chloroplast. It carries out the reaction RX + glutathione = an S-substituted glutathione + a halide anion + H(+). Catalyzes the glutathione-dependent reduction of S-glutathionylquercetin to quercetin. In vitro, possesses glutathione-dependent thiol transferase activity toward 2-hydroxyethyl disulfide (HED). This chain is Glutathione S-transferase L2, chloroplastic (GSTL2), found in Arabidopsis thaliana (Mouse-ear cress).